Reading from the N-terminus, the 273-residue chain is GATA-type zinc finger protein 1 (273 aa).

2 disordered regions span residues 99–143 (RDSK…ERVD) and 172–201 (SSRS…AGSE). The GATA-type zinc finger occupies 208 to 232 (CASCRTQRTPLWRDAEDGTPLCNAC).

It is found in the nucleus. Transcriptional regulator that plays a key role in germ cell development. Determines the oogenic fate by activating key genes for the oogenic program and meiotic prophase entry. Acts downstream of bone morphogenetic protein (BMP) by regulating expression of genes required for the oogenic programs, which are repressed by Polycomb activities in sexually uncommitted germ cells. Regulates expression of STRA8, a central downstream effector for the meiotic program. Acts independently of retinoic acid (RA). In males, not required for germ-cell sex determination, but required to allow the spermatogonia to efficiently accomplish the meiotic prophase. The chain is GATA-type zinc finger protein 1 from Homo sapiens (Human).